A 176-amino-acid chain; its full sequence is Avian agnoprotein 1a (176 aa).

Disordered regions lie at residues Met-1–Glu-85 and Val-116–Arg-176. Residues Tyr-75–Glu-85 are compositionally biased toward basic and acidic residues. Positions Asp-76–Ala-119 form a coiled coil. The span at Thr-137 to Ser-161 shows a compositional bias: low complexity.

In terms of assembly, interacts with VP1.

Its subcellular location is the virion. It localises to the host nucleus. This chain is Avian agnoprotein 1a, found in Budgerigar fledgling disease virus (BFPyV).